A 274-amino-acid chain; its full sequence is Oxidoreductase BOA17 (274 aa).

The NADP(+) site is built by Leu-14, Thr-32, Asp-57, Asn-84, and Lys-117. Active-site proton donor residues include Ser-135 and Tyr-149. Positions 149, 153, 182, and 184 each coordinate NADP(+). Lys-153 serves as the catalytic Lowers pKa of active site Tyr.

This sequence belongs to the short-chain dehydrogenases/reductases (SDR) family.

Its pathway is polyketide biosynthesis. Oxidoreductase; part of the gene cluster B that mediates the biosynthesis of botcinic acid and its botcinin derivatives, acetate-derived polyketides that contribute to virulence when combined with the sesquiterpene botrydial. Botcinic acid and its derivatives have been shown to induce chlorosis and necrosis during host plant infection, but also have antifungal activities. Two polyketide synthases, BOA6 and BOA9, are involved in the biosynthesis of botcinins. BOA6 mediates the formation of the per-methylated tetraketide core by condensation of four units of malonyl-CoA with one unit of acetyl-CoA, which would be methylated in activated methylene groups to yield a bicyclic acid intermediate that could then either be converted to botrylactone derivatives or lose the starter acetate unit through a retro-Claisen type C-C bond cleavage to yield botcinin derivatives. The second polyketide synthase, BOA9, is probably required for the biosynthesis of the tetraketide side chain of botcinins. The methyltransferase (MT) domain within BOA6 is probably responsible for the incorporation of four methyl groups. The trans-enoyl reductase BOA5 might take over the enoyl reductase function of BOA6 that misses an ER domain. The monooxygenases BOA2, BOA3 and BOA4 might be involved in further hydroxylations at C4, C5 and C8, whereas BOA7, close to BOA9, could potentially be involved in the hydroxylation at C4 in the side chain of botcinins. This is Oxidoreductase BOA17 from Botryotinia fuckeliana (strain B05.10) (Noble rot fungus).